We begin with the raw amino-acid sequence, 70 residues long: Large ribosomal subunit protein bL31 (70 aa).

The Zn(2+) site is built by Cys-16, Cys-18, Cys-38, and Cys-41.

This sequence belongs to the bacterial ribosomal protein bL31 family. Type A subfamily. In terms of assembly, part of the 50S ribosomal subunit. It depends on Zn(2+) as a cofactor.

Binds the 23S rRNA. This chain is Large ribosomal subunit protein bL31, found in Vesicomyosocius okutanii subsp. Calyptogena okutanii (strain HA).